Here is a 1576-residue protein sequence, read N- to C-terminus: Pentafunctional AROM polypeptide (1576 aa).

The segment at Met-1–Asp-387 is 3-dehydroquinate synthase. NAD(+) contacts are provided by residues Asp-49–Asn-51, Glu-86–Lys-89, Gly-117–Val-119, and Asp-122. Arg-133 contributes to the 7-phospho-2-dehydro-3-deoxy-D-arabino-heptonate binding site. Thr-142–Thr-143 contributes to the NAD(+) binding site. Positions 149 and 155 each coordinate 7-phospho-2-dehydro-3-deoxy-D-arabino-heptonate. Lys-164 is a binding site for NAD(+). Asn-165 contacts 7-phospho-2-dehydro-3-deoxy-D-arabino-heptonate. Residues Phe-182–Thr-185 and Asn-193 contribute to the NAD(+) site. Glu-197 provides a ligand contact to Zn(2+). Residues Glu-197 to Lys-200 and Lys-253 each bind 7-phospho-2-dehydro-3-deoxy-D-arabino-heptonate. The Proton acceptor; for 3-dehydroquinate synthase activity role is filled by Glu-263. Residues Arg-267–Asn-271 and His-274 each bind 7-phospho-2-dehydro-3-deoxy-D-arabino-heptonate. Residue His-274 coordinates Zn(2+). The active-site Proton acceptor; for 3-dehydroquinate synthase activity is His-278. Positions 290 and 359 each coordinate 7-phospho-2-dehydro-3-deoxy-D-arabino-heptonate. Residue His-290 participates in Zn(2+) binding. Residues Val-400–Val-841 are EPSP synthase. The For EPSP synthase activity role is filled by Cys-823. The interval Asp-863 to Ser-1055 is shikimate kinase. Residue Gly-870 to Thr-877 coordinates ATP. The segment at Leu-1056–Glu-1276 is 3-dehydroquinase. His-1179 acts as the Proton acceptor; for 3-dehydroquinate dehydratase activity in catalysis. Lys-1207 (schiff-base intermediate with substrate; for 3-dehydroquinate dehydratase activity) is an active-site residue. A shikimate dehydrogenase region spans residues Pro-1289–Ala-1576.

The protein in the N-terminal section; belongs to the sugar phosphate cyclases superfamily. Dehydroquinate synthase family. It in the 2nd section; belongs to the EPSP synthase family. In the 3rd section; belongs to the shikimate kinase family. This sequence in the 4th section; belongs to the type-I 3-dehydroquinase family. The protein in the C-terminal section; belongs to the shikimate dehydrogenase family. In terms of assembly, homodimer. The cofactor is Zn(2+).

Its subcellular location is the cytoplasm. The enzyme catalyses 7-phospho-2-dehydro-3-deoxy-D-arabino-heptonate = 3-dehydroquinate + phosphate. The catalysed reaction is 3-dehydroquinate = 3-dehydroshikimate + H2O. It carries out the reaction shikimate + NADP(+) = 3-dehydroshikimate + NADPH + H(+). It catalyses the reaction shikimate + ATP = 3-phosphoshikimate + ADP + H(+). The enzyme catalyses 3-phosphoshikimate + phosphoenolpyruvate = 5-O-(1-carboxyvinyl)-3-phosphoshikimate + phosphate. It participates in metabolic intermediate biosynthesis; chorismate biosynthesis; chorismate from D-erythrose 4-phosphate and phosphoenolpyruvate: step 2/7. Its pathway is metabolic intermediate biosynthesis; chorismate biosynthesis; chorismate from D-erythrose 4-phosphate and phosphoenolpyruvate: step 3/7. The protein operates within metabolic intermediate biosynthesis; chorismate biosynthesis; chorismate from D-erythrose 4-phosphate and phosphoenolpyruvate: step 4/7. It functions in the pathway metabolic intermediate biosynthesis; chorismate biosynthesis; chorismate from D-erythrose 4-phosphate and phosphoenolpyruvate: step 5/7. It participates in metabolic intermediate biosynthesis; chorismate biosynthesis; chorismate from D-erythrose 4-phosphate and phosphoenolpyruvate: step 6/7. Functionally, the AROM polypeptide catalyzes 5 consecutive enzymatic reactions in prechorismate polyaromatic amino acid biosynthesis. The chain is Pentafunctional AROM polypeptide from Sclerotinia sclerotiorum (strain ATCC 18683 / 1980 / Ss-1) (White mold).